The sequence spans 291 residues: Lipoyl synthase (291 aa).

[4Fe-4S] cluster-binding residues include Cys43, Cys48, Cys54, Cys69, Cys73, Cys76, and Ser280. In terms of domain architecture, Radical SAM core spans 55–269; sequence FSSRTATFLI…AAYGRARGIP (215 aa).

The protein belongs to the radical SAM superfamily. Lipoyl synthase family. [4Fe-4S] cluster serves as cofactor.

It localises to the cytoplasm. The catalysed reaction is [[Fe-S] cluster scaffold protein carrying a second [4Fe-4S](2+) cluster] + N(6)-octanoyl-L-lysyl-[protein] + 2 oxidized [2Fe-2S]-[ferredoxin] + 2 S-adenosyl-L-methionine + 4 H(+) = [[Fe-S] cluster scaffold protein] + N(6)-[(R)-dihydrolipoyl]-L-lysyl-[protein] + 4 Fe(3+) + 2 hydrogen sulfide + 2 5'-deoxyadenosine + 2 L-methionine + 2 reduced [2Fe-2S]-[ferredoxin]. It functions in the pathway protein modification; protein lipoylation via endogenous pathway; protein N(6)-(lipoyl)lysine from octanoyl-[acyl-carrier-protein]: step 2/2. In terms of biological role, catalyzes the radical-mediated insertion of two sulfur atoms into the C-6 and C-8 positions of the octanoyl moiety bound to the lipoyl domains of lipoate-dependent enzymes, thereby converting the octanoylated domains into lipoylated derivatives. This Oleidesulfovibrio alaskensis (strain ATCC BAA-1058 / DSM 17464 / G20) (Desulfovibrio alaskensis) protein is Lipoyl synthase.